Consider the following 214-residue polypeptide: MRIILLGAPGAGKGTQAQFIMEQYGIPQISTGDMLRAAVKAGTPLGLEAKKVMDAGQLVSDDLIIGLVKERIAQEDCVKGFLLDGFPRTIPQADAMAENGIEIDHVIEIDVPDEEIVKRMSGRRVHSGSGRVYHVVFNPPKVEGKDDVTGEDLSIRPDDEESTVRKRLGIYHEQTKPLVDYYGKVAAEGRTQYNKFDGTQSVTKVSEQLASVLK.

10–15 provides a ligand contact to ATP; it reads GAGKGT. The tract at residues 30–59 is NMP; the sequence is STGDMLRAAVKAGTPLGLEAKKVMDAGQLV. Residues T31, R36, 57 to 59, 85 to 88, and Q92 each bind AMP; these read QLV and GFPR. Residues 122–159 are LID; that stretch reads GRRVHSGSGRVYHVVFNPPKVEGKDDVTGEDLSIRPDD. ATP contacts are provided by residues R123 and 132–133; that span reads VY. Residues R156 and R167 each contribute to the AMP site. Q200 is an ATP binding site.

It belongs to the adenylate kinase family. In terms of assembly, monomer.

Its subcellular location is the cytoplasm. It catalyses the reaction AMP + ATP = 2 ADP. It participates in purine metabolism; AMP biosynthesis via salvage pathway; AMP from ADP: step 1/1. Functionally, catalyzes the reversible transfer of the terminal phosphate group between ATP and AMP. Plays an important role in cellular energy homeostasis and in adenine nucleotide metabolism. The protein is Adenylate kinase of Shewanella frigidimarina (strain NCIMB 400).